A 2550-amino-acid polypeptide reads, in one-letter code: Highly reducing polyketide synthase otaA (2550 aa).

In terms of domain architecture, Ketosynthase family 3 (KS3) spans 9–431 (SEPLAIIGLA…GTNAHAVVED (423 aa)). Active-site for beta-ketoacyl synthase activity residues include Cys182, His317, and His355. The tract at residues 572-894 (FVFTGQGANW…KRYETNGSTI (323 aa)) is malonyl-CoA:ACP transacylase (MAT) domain. The interval 959–1094 (HELLGVPVED…GSVRAETGPP (136 aa)) is N-terminal hotdog fold. A dehydratase (DH) domain region spans residues 959-1252 (HELLGVPVED…DLVQLPANND (294 aa)). The PKS/mFAS DH domain maps to 959–1253 (HELLGVPVED…LVQLPANNDD (295 aa)). Residues 1107 to 1253 (AEPVDIAQMY…LVQLPANNDD (147 aa)) are C-terminal hotdog fold. Residues Ile1420 and Glu1442 each contribute to the S-adenosyl-L-methionine site. The tract at residues 1433-1612 (HAQTGIKILE…GLRPRLIIND (180 aa)) is methyltransferase (CMeT) domain. The tract at residues 1859–1919 (PDEVKIRIHA…DQVMALRTGP (61 aa)) is enoyl reductase (ER) (ER) domain. Residues 2166 to 2345 (ASYLLIGGFG…PATSVSLGSV (180 aa)) are ketoreductase (KR) domain. One can recognise a Carrier domain in the interval 2454 to 2531 (AAVEVVTRAI…QLAQQAADAS (78 aa)). At Ser2491 the chain carries O-(pantetheine 4'-phosphoryl)serine.

It depends on pantetheine 4'-phosphate as a cofactor.

The catalysed reaction is 4 malonyl-CoA + acetyl-CoA + 5 NADPH + 9 H(+) = 7-methylmellein + 3 CO2 + 5 NADP(+) + 5 CoA + 4 H2O. It functions in the pathway mycotoxin biosynthesis. Its function is as follows. Highly reducing polyketide synthase; part of the gene cluster that mediates the biosynthesis of ochratoxin A (OTA), a mycotoxin composed of a chlorinated type I polyketide dihydroisocoumarin moiety linked to L-phenylalanine, and demonstrated to have nephrotoxic, immunotoxic, genotoxic, neurotoxic, and teratogenic properties. OtaA catalyzes the condensation of one acetate and 4 malonate units to form the isocoumarin group. The pathway begins with the highly reducing polyketide synthase otaA that catalyzes the formation of the isocoumarin group during the initial stages of biosynthesis, starting from one acetate and 4 malonate units, to originate the characteristic pentaketide skeleton 7-methylmellein (7-MM) of the OTA molecule. The newly identified cyclase otaY might be involved in the polyketide cyclization reaction during the initial steps of the OTA biosynthesis. 7-MM is then oxidized into 7-carboxymellein (also called ochratoxin beta) by the cytochrome P450 monooxygenase otaC. The NRPS encoded by the otaB gene is involved in the linking of phenylalanine to the dihydroisocoumarin ring. The reaction catalyzed by NRPS results in the production of ochratoxin B (OTB), which is the non-chlorinated analog of OTA and which subsequently serves as the substrate of the halogenase otaD for chlorination activity to form the final molecular structure of OTA, containing a chlorine atom in the C-5 position of the molecule. This chain is Highly reducing polyketide synthase otaA, found in Aspergillus niger (strain ATCC MYA-4892 / CBS 513.88 / FGSC A1513).